The chain runs to 162 residues: Caveolin-2 (162 aa).

At 1 to 86 (MGLETEKADA…FEVSKYLIYK (86 aa)) the chain is on the cytoplasmic side. Tyr-19 bears the Phosphotyrosine; by SRC mark. The segment at 19 to 40 (YSRHSGLGYPEPEKCAKSTQDR) is disordered. Residues Ser-20 and Ser-23 each carry the phosphoserine modification. Tyr-27 bears the Phosphotyrosine; by SRC mark. The span at 29 to 40 (EPEKCAKSTQDR) shows a compositional bias: basic and acidic residues. Ser-36 is modified (phosphoserine). Residues 87–107 (VLTVLLAIPLAFVAGILFATL) constitute an intramembrane region (helical). At 108–162 (SCLHIWIVVPFVKTCLMVLPSVQTVWHSITDGFIAPLYKSMGLIFSSISLRLSPE) the chain is on the cytoplasmic side.

It belongs to the caveolin family. Monomer or homodimer. Interacts with CAV1; the interaction forms a stable heterooligomeric complex that is required for targeting to lipid rafts and for caveolae formation. Tyrosine phosphorylated forms do not form heterooligomers with the Tyr-19-phosphorylated form existing as a monomer or dimer, and the Tyr-27-form as a monomer only. Interacts (tyrosine phosphorylated form) with the SH2 domain-containing proteins, RASA1, NCK1 and SRC. Interacts (tyrosine phosphorylated form) with INSR, the interaction (Tyr-27-phosphorylated form) is increased on insulin stimulation. Interacts (Tyr-19 phosphorylated form) with MAPK1 (phosphorylated form); the interaction, promoted by insulin, leads to nuclear location and MAPK1 activation. Interacts with STAT3; the interaction is increased on insulin-induced tyrosine phosphorylation leading to STAT activation. Post-translationally, phosphorylated on serine and tyrosine residues. CAV1 promotes phosphorylation on Ser-23 which then targets the complex to the plasma membrane, lipid rafts and caveolae. Phosphorylation on Ser-36 appears to modulate mitosis in endothelial cells. Phosphorylation on both Tyr-19 and Tyr-27 is required for insulin-induced 'Ser-727' phosphorylation of STAT3 and its activation. Phosphorylation on Tyr-19 is required for insulin-induced phosphorylation of MAPK1 and DNA binding of STAT3. Tyrosine phosphorylation is induced by both EGF and insulin (By. similarity).

It is found in the nucleus. Its subcellular location is the cytoplasm. The protein resides in the golgi apparatus membrane. The protein localises to the cell membrane. It localises to the membrane. It is found in the caveola. Its function is as follows. May act as a scaffolding protein within caveolar membranes. Interacts directly with G-protein alpha subunits and can functionally regulate their activity. Acts as an accessory protein in conjunction with CAV1 in targeting to lipid rafts and driving caveolae formation. The Ser-36 phosphorylated form has a role in modulating mitosis in endothelial cells. Positive regulator of cellular mitogenesis of the MAPK signaling pathway. Required for the insulin-stimulated nuclear translocation and activation of MAPK1 and STAT3, and the subsequent regulation of cell cycle progression. The sequence is that of Caveolin-2 (CAV2) from Didelphis virginiana (North American opossum).